A 341-amino-acid chain; its full sequence is Ribosomal RNA small subunit methyltransferase C (341 aa).

Belongs to the methyltransferase superfamily. RsmC family. In terms of assembly, monomer.

The protein resides in the cytoplasm. It catalyses the reaction guanosine(1207) in 16S rRNA + S-adenosyl-L-methionine = N(2)-methylguanosine(1207) in 16S rRNA + S-adenosyl-L-homocysteine + H(+). In terms of biological role, specifically methylates the guanine in position 1207 of 16S rRNA in the 30S particle. The protein is Ribosomal RNA small subunit methyltransferase C of Shewanella halifaxensis (strain HAW-EB4).